The following is a 246-amino-acid chain: 4-hydroxy-tetrahydrodipicolinate reductase (246 aa).

Residues 7 to 12 (GATGRT), 84 to 86 (GTT), and 108 to 111 (ASNF) contribute to the NAD(+) site. The active-site Proton donor/acceptor is the H140. H141 serves as a coordination point for (S)-2,3,4,5-tetrahydrodipicolinate. The active-site Proton donor is K144. Position 150–151 (150–151 (GT)) interacts with (S)-2,3,4,5-tetrahydrodipicolinate.

This sequence belongs to the DapB family.

It is found in the cytoplasm. The enzyme catalyses (S)-2,3,4,5-tetrahydrodipicolinate + NAD(+) + H2O = (2S,4S)-4-hydroxy-2,3,4,5-tetrahydrodipicolinate + NADH + H(+). The catalysed reaction is (S)-2,3,4,5-tetrahydrodipicolinate + NADP(+) + H2O = (2S,4S)-4-hydroxy-2,3,4,5-tetrahydrodipicolinate + NADPH + H(+). The protein operates within amino-acid biosynthesis; L-lysine biosynthesis via DAP pathway; (S)-tetrahydrodipicolinate from L-aspartate: step 4/4. Catalyzes the conversion of 4-hydroxy-tetrahydrodipicolinate (HTPA) to tetrahydrodipicolinate. The protein is 4-hydroxy-tetrahydrodipicolinate reductase of Natronomonas pharaonis (strain ATCC 35678 / DSM 2160 / CIP 103997 / JCM 8858 / NBRC 14720 / NCIMB 2260 / Gabara) (Halobacterium pharaonis).